A 501-amino-acid chain; its full sequence is MDKQKFGLTAKKEEDFSEWYVQVITKGEMIDYYAIKGCYVMRPLGQFVWKCIHKWFTKKIEELGVQECYFPMLVPKSMLEMEKDHVENFSPEVAWITKCGNQVLEDPVAVRPTSETIIYPSFSKWIRSHRDLPLKLNQWCSVLRWELHGTLPFIRGKEFLWQEGHTAFLTRKESDEEVLAILDLYSQIYSELLAVPVIKGRKSENEKFGGADYTTSIEAFIPGSGRGVQAATSHSLGQNFSRMFDIKADTDEGSESSSFVYQNSWGITTRSIGIAAMIHSDNLGLVLPPRVAMTQVVIVPCGITTASSKDDTESLRAYINGVCVQLKNSGVRVHLDDRSNVTAGFKFNHWEIRGVPLRLEIGFKDMASSEACLVRRDTRAKKQVSVEGIAHTVMEEIDTMHNDMLARATSERDSRISYVKSFEEFMSALDNKNIIMAPWCGISECEIEIKSRSTRADPRSDVVSTGAKTLCIPYGSKPCDGMKCINCNSQAVHYTLFGRSY.

Belongs to the class-II aminoacyl-tRNA synthetase family.

The catalysed reaction is tRNA(Pro) + L-proline + ATP = L-prolyl-tRNA(Pro) + AMP + diphosphate. The protein is Proline--tRNA ligase of Encephalitozoon cuniculi (strain GB-M1) (Microsporidian parasite).